The following is an 800-amino-acid chain: Nuclear poly(A) polymerase 2 (800 aa).

ATP is bound by residues 103 to 105, 115 to 118, D171, K232, Y241, and 250 to 251; these read FGS, ADID, and GV. The Mg(2+) site is built by D116, D118, and D171. 2 consecutive short sequence motifs (nuclear localization signal) follow at residues 487–494 and 533–540; these read RRRQLPSF and KRKNDDEI. Residues 497 to 576 are disordered; the sequence is PNGYKRSRQS…SGITTSGTPQ (80 aa). Over residues 527-538 the composition is skewed to basic and acidic residues; the sequence is SVERYAKRKNDD. Over residues 564-575 the composition is skewed to polar residues; it reads PDSSGITTSGTP.

The protein belongs to the poly(A) polymerase family. As to quaternary structure, monomer. Forms a complex with cleavage and polyadenylation specificity factor (CPSF) subunits CPSF100, CPSF30, FIPS5 and PABN2. Mg(2+) is required as a cofactor. The cofactor is Mn(2+). In terms of tissue distribution, mostly expressed in flowers (highly in the style, receptacle and pedicel, but weakly in the vasculature of sepals) and hypocotyls, and, to a lower extent, in roots and stems. Barely detected in leaves (petioles and vascular system).

It localises to the nucleus. Its subcellular location is the cytoplasm. The enzyme catalyses RNA(n) + ATP = RNA(n)-3'-adenine ribonucleotide + diphosphate. Functionally, essential protein. Polymerase that creates the 3'-poly(A) tail of mRNA's. Also required for the endoribonucleolytic cleavage reaction at some polyadenylation sites. May acquire specificity through interaction with a cleavage and polyadenylation specificity factor (CPSF) at its C-terminus. Mediates the polyadenylation of RNAs that are associated with polynucleotide phosphorylase (e.g. PNP1). The chain is Nuclear poly(A) polymerase 2 from Arabidopsis thaliana (Mouse-ear cress).